Reading from the N-terminus, the 1007-residue chain is A disintegrin and metalloproteinase with thrombospondin motifs 1 (1007 aa).

Positions 1–20 are cleaved as a signal peptide; it reads MPCCLWAALSLLLAVVGAGA. Residues Asn130 and Asn228 are each glycosylated (N-linked (GlcNAc...) asparagine). The region spanning 184 to 370 is the Peptidase M12B domain; it reads LWLELAIVAD…WSSCSKEQFH (187 aa). His322 provides a ligand contact to Zn(2+). Positions 322–333 match the Metal-binding motif; that stretch reads HELAHLLGLTHD. Glu323 is a catalytic residue. His326 and His332 together coordinate Zn(2+). Intrachain disulfides connect Cys338–Cys364, Cys494–Cys530, Cys498–Cys536, and Cys509–Cys520. A TSP type-1 1 domain is found at 482–537; that stretch reads TPEWGDWEEWSACNADCGYGLRTRTRKCKYRGFVSESACEGAGSQVATCWAGSSCA. N-linked (GlcNAc...) asparagine glycans are attached at residues Asn561, Asn610, Asn626, Asn737, Asn777, and Asn865. 2 consecutive TSP type-1 domains span residues 833-899 and 900-952; these read CEFV…NRIP and CPVY…RRCP. Cystine bridges form between Cys912–Cys946, Cys916–Cys951, and Cys927–Cys935.

The cofactor is Zn(2+).

It localises to the secreted. It is found in the extracellular space. Its subcellular location is the extracellular matrix. Functionally, involved in larval molting and metamorphosis. May degrade extracellular matrix (ECM) and basement membrane (BM) during the development of organs to allow degeneration and remodeling of tissues. This chain is A disintegrin and metalloproteinase with thrombospondin motifs 1, found in Bombyx mori (Silk moth).